A 306-amino-acid chain; its full sequence is tRNA pseudouridine synthase B (306 aa).

Catalysis depends on D46, which acts as the Nucleophile.

Belongs to the pseudouridine synthase TruB family. Type 1 subfamily.

It catalyses the reaction uridine(55) in tRNA = pseudouridine(55) in tRNA. Functionally, responsible for synthesis of pseudouridine from uracil-55 in the psi GC loop of transfer RNAs. The sequence is that of tRNA pseudouridine synthase B from Gluconacetobacter diazotrophicus (strain ATCC 49037 / DSM 5601 / CCUG 37298 / CIP 103539 / LMG 7603 / PAl5).